The following is a 393-amino-acid chain: tRNA-specific 2-thiouridylase MnmA (393 aa).

ATP-binding positions include A19 to S26 and L45. C113 acts as the Nucleophile in catalysis. A disulfide bridge connects residues C113 and C210. Position 137 (G137) interacts with ATP. Residues R160–Q162 are interaction with tRNA. Catalysis depends on C210, which acts as the Cysteine persulfide intermediate.

This sequence belongs to the MnmA/TRMU family.

It is found in the cytoplasm. It catalyses the reaction S-sulfanyl-L-cysteinyl-[protein] + uridine(34) in tRNA + AH2 + ATP = 2-thiouridine(34) in tRNA + L-cysteinyl-[protein] + A + AMP + diphosphate + H(+). Functionally, catalyzes the 2-thiolation of uridine at the wobble position (U34) of tRNA, leading to the formation of s(2)U34. This Afipia carboxidovorans (strain ATCC 49405 / DSM 1227 / KCTC 32145 / OM5) (Oligotropha carboxidovorans) protein is tRNA-specific 2-thiouridylase MnmA.